Here is a 200-residue protein sequence, read N- to C-terminus: Outer-membrane lipoprotein carrier protein (200 aa).

Positions 1–18 are cleaved as a signal peptide; it reads MKAVVFAMVMAVSFNVFA.

Belongs to the LolA family. As to quaternary structure, monomer.

The protein localises to the periplasm. In terms of biological role, participates in the translocation of lipoproteins from the inner membrane to the outer membrane. Only forms a complex with a lipoprotein if the residue after the N-terminal Cys is not an aspartate (The Asp acts as a targeting signal to indicate that the lipoprotein should stay in the inner membrane). The protein is Outer-membrane lipoprotein carrier protein of Idiomarina loihiensis (strain ATCC BAA-735 / DSM 15497 / L2-TR).